Reading from the N-terminus, the 601-residue chain is Elongation factor 4 (601 aa).

Residues 8-189 (EQIRNFGIIA…LIVRKAPPPK (182 aa)) form the tr-type G domain. 20–25 (DHGKST) contacts GTP.

Belongs to the TRAFAC class translation factor GTPase superfamily. Classic translation factor GTPase family. LepA subfamily.

It localises to the cell membrane. It carries out the reaction GTP + H2O = GDP + phosphate + H(+). Required for accurate and efficient protein synthesis under certain stress conditions. May act as a fidelity factor of the translation reaction, by catalyzing a one-codon backward translocation of tRNAs on improperly translocated ribosomes. Back-translocation proceeds from a post-translocation (POST) complex to a pre-translocation (PRE) complex, thus giving elongation factor G a second chance to translocate the tRNAs correctly. Binds to ribosomes in a GTP-dependent manner. This is Elongation factor 4 from Tropheryma whipplei (strain Twist) (Whipple's bacillus).